A 287-amino-acid chain; its full sequence is Protease HtpX (287 aa).

2 helical membrane passes run 4 to 24 and 33 to 53; these read IFLL…VMSI and GGLL…SLAI. His139 provides a ligand contact to Zn(2+). Glu140 is a catalytic residue. Residue His143 coordinates Zn(2+). The next 2 membrane-spanning stretches (helical) occupy residues 154-174 and 195-215; these read LIQG…AGII and AVVF…VAYF. Position 220 (Glu220) interacts with Zn(2+).

Belongs to the peptidase M48B family. Requires Zn(2+) as cofactor.

The protein resides in the cell inner membrane. The sequence is that of Protease HtpX from Shewanella baltica (strain OS223).